Here is a 149-residue protein sequence, read N- to C-terminus: Large ribosomal subunit protein uL24 (149 aa).

The segment at 114-149 (RKIIERSGGTPEVEAVPEKSEEEKEEKEKEEEKSEE) is disordered. Basic and acidic residues predominate over residues 129-149 (VPEKSEEEKEEKEKEEEKSEE).

The protein belongs to the universal ribosomal protein uL24 family. Part of the 50S ribosomal subunit.

In terms of biological role, one of two assembly initiator proteins, it binds directly to the 5'-end of the 23S rRNA, where it nucleates assembly of the 50S subunit. Located at the polypeptide exit tunnel on the outside of the subunit. This chain is Large ribosomal subunit protein uL24, found in Methanopyrus kandleri (strain AV19 / DSM 6324 / JCM 9639 / NBRC 100938).